We begin with the raw amino-acid sequence, 118 residues long: Small ribosomal subunit protein uS13 (118 aa).

Residues 92–118 (KKHLPVRGQRTKTNARTRKGPRKPIKK) are disordered.

This sequence belongs to the universal ribosomal protein uS13 family. As to quaternary structure, part of the 30S ribosomal subunit. Forms a loose heterodimer with protein S19. Forms two bridges to the 50S subunit in the 70S ribosome.

Its function is as follows. Located at the top of the head of the 30S subunit, it contacts several helices of the 16S rRNA. In the 70S ribosome it contacts the 23S rRNA (bridge B1a) and protein L5 of the 50S subunit (bridge B1b), connecting the 2 subunits; these bridges are implicated in subunit movement. Contacts the tRNAs in the A and P-sites. The chain is Small ribosomal subunit protein uS13 from Wigglesworthia glossinidia brevipalpis.